The following is a 73-amino-acid chain: MTNMTNQISNNTGSVQSQVRFLTDRIQKLSRHLGTHKKDFSCQRSIRKLLIKRKRLLLYLYKKDKTGYNQVKS.

Belongs to the universal ribosomal protein uS15 family. As to quaternary structure, part of the 30S ribosomal subunit.

The protein resides in the plastid. It localises to the chloroplast. The polypeptide is Small ribosomal subunit protein uS15c (rps15) (Welwitschia mirabilis (Tree tumbo)).